Here is a 382-residue protein sequence, read N- to C-terminus: uncharacterized protein (382 aa).

A run of 12 helical transmembrane segments spans residues 14-34 (GLLL…LWLA), 45-65 (MVSS…GYLI), 79-99 (LVFA…SWMA), 102-122 (FVAG…LMCS), 131-151 (LLAA…LLVS), 157-177 (LMNV…PLLF), 204-224 (LGVN…GLMP), 236-256 (NIGF…WPIG), 265-285 (LLVL…MLTH), 289-309 (APAL…AMAW), 325-345 (ALLL…AMLM), and 349-369 (SDNL…LMLL).

This sequence belongs to the major facilitator superfamily. YcaD (TC 2.A.1.26) family.

The protein localises to the cell inner membrane. This is an uncharacterized protein from Escherichia fergusonii (strain ATCC 35469 / DSM 13698 / CCUG 18766 / IAM 14443 / JCM 21226 / LMG 7866 / NBRC 102419 / NCTC 12128 / CDC 0568-73).